Reading from the N-terminus, the 250-residue chain is Pyrroloquinoline-quinone synthase (250 aa).

The protein belongs to the PqqC family.

The enzyme catalyses 6-(2-amino-2-carboxyethyl)-7,8-dioxo-1,2,3,4,7,8-hexahydroquinoline-2,4-dicarboxylate + 3 O2 = pyrroloquinoline quinone + 2 H2O2 + 2 H2O + H(+). It participates in cofactor biosynthesis; pyrroloquinoline quinone biosynthesis. Ring cyclization and eight-electron oxidation of 3a-(2-amino-2-carboxyethyl)-4,5-dioxo-4,5,6,7,8,9-hexahydroquinoline-7,9-dicarboxylic-acid to PQQ. The protein is Pyrroloquinoline-quinone synthase of Xanthomonas euvesicatoria pv. vesicatoria (strain 85-10) (Xanthomonas campestris pv. vesicatoria).